The chain runs to 82 residues: Sec-independent protein translocase protein TatA (82 aa).

A helical transmembrane segment spans residues 1 to 21 (MGGISIWQLLIIAVIIVLLFG). Residues 48–82 (PAKEAKKDADFVPQNLEKKEAETVEKQKQNDKEQA) are disordered.

It belongs to the TatA/E family. The Tat system comprises two distinct complexes: a TatABC complex, containing multiple copies of TatA, TatB and TatC subunits, and a separate TatA complex, containing only TatA subunits. Substrates initially bind to the TatABC complex, which probably triggers association of the separate TatA complex to form the active translocon.

Its subcellular location is the cell inner membrane. Functionally, part of the twin-arginine translocation (Tat) system that transports large folded proteins containing a characteristic twin-arginine motif in their signal peptide across membranes. TatA could form the protein-conducting channel of the Tat system. The chain is Sec-independent protein translocase protein TatA from Aliivibrio fischeri (strain ATCC 700601 / ES114) (Vibrio fischeri).